A 552-amino-acid polypeptide reads, in one-letter code: Glutamine--tRNA ligase (552 aa).

The short motif at 34–44 (PEPNGYLHIGH) is the 'HIGH' region element. ATP contacts are provided by residues 35-37 (EPN) and 41-47 (HIGHAKS). The L-glutamine site is built by aspartate 67 and tyrosine 212. ATP contacts are provided by residues threonine 231, 261–262 (RL), and 269–271 (MSK). A 'KMSKS' region motif is present at residues 268-272 (IMSKR).

This sequence belongs to the class-I aminoacyl-tRNA synthetase family. As to quaternary structure, monomer.

The protein localises to the cytoplasm. The enzyme catalyses tRNA(Gln) + L-glutamine + ATP = L-glutaminyl-tRNA(Gln) + AMP + diphosphate. This Aliivibrio salmonicida (strain LFI1238) (Vibrio salmonicida (strain LFI1238)) protein is Glutamine--tRNA ligase.